The primary structure comprises 429 residues: Glutamate-1-semialdehyde 2,1-aminomutase (429 aa).

Lys-265 is subject to N6-(pyridoxal phosphate)lysine.

This sequence belongs to the class-III pyridoxal-phosphate-dependent aminotransferase family. HemL subfamily. In terms of assembly, homodimer. It depends on pyridoxal 5'-phosphate as a cofactor.

The protein resides in the cytoplasm. The enzyme catalyses (S)-4-amino-5-oxopentanoate = 5-aminolevulinate. It functions in the pathway porphyrin-containing compound metabolism; protoporphyrin-IX biosynthesis; 5-aminolevulinate from L-glutamyl-tRNA(Glu): step 2/2. The sequence is that of Glutamate-1-semialdehyde 2,1-aminomutase from Legionella pneumophila subsp. pneumophila (strain Philadelphia 1 / ATCC 33152 / DSM 7513).